The sequence spans 670 residues: DNA ligase (670 aa).

NAD(+)-binding positions include 33-37 (DAEFD), 82-83 (SL), and E113. K115 serves as the catalytic N6-AMP-lysine intermediate. NAD(+) contacts are provided by R136, E170, K285, and K309. Residues C403, C406, C421, and C427 each coordinate Zn(2+). Positions 587–670 (EQNLYLSGKT…EVLKAGDNNG (84 aa)) constitute a BRCT domain.

The protein belongs to the NAD-dependent DNA ligase family. LigA subfamily. Mg(2+) is required as a cofactor. The cofactor is Mn(2+).

The enzyme catalyses NAD(+) + (deoxyribonucleotide)n-3'-hydroxyl + 5'-phospho-(deoxyribonucleotide)m = (deoxyribonucleotide)n+m + AMP + beta-nicotinamide D-nucleotide.. DNA ligase that catalyzes the formation of phosphodiester linkages between 5'-phosphoryl and 3'-hydroxyl groups in double-stranded DNA using NAD as a coenzyme and as the energy source for the reaction. It is essential for DNA replication and repair of damaged DNA. In Halothermothrix orenii (strain H 168 / OCM 544 / DSM 9562), this protein is DNA ligase.